The sequence spans 210 residues: Probable membrane protein Rv1733c (210 aa).

2 helical membrane passes run 43–63 and 165–185; these read AVVM…AAAA and ALAA…LLAL.

The protein resides in the cell membrane. The protein is Probable membrane protein Rv1733c of Mycobacterium tuberculosis (strain ATCC 25618 / H37Rv).